Consider the following 55-residue polypeptide: MLYRNGLCFGFLQLQGLEDEFIEHMRQVAEYEKDLRYKKAAANFMKMHDQNWVGD.

This is an uncharacterized protein from Bacillus subtilis (strain 168).